The chain runs to 334 residues: L-lactate dehydrogenase B chain (334 aa).

A2 carries the N-acetylalanine modification. At K7 the chain carries N6-acetyllysine. Residues 30–58 and R100 each bind NAD(+); that span reads GQVGMACAISILGKSLADELALVDVLEDK. S44 carries the phosphoserine modification. K58 carries the post-translational modification N6-acetyllysine. R107 contacts substrate. K119 bears the N6-acetyllysine mark. Residue N139 coordinates NAD(+). Substrate is bound by residues N139 and R170. H194 serves as the catalytic Proton acceptor. Y240 carries the phosphotyrosine modification. T249 is a substrate binding site. K329 carries the N6-acetyllysine modification.

Belongs to the LDH/MDH superfamily. LDH family. Homotetramer. Interacts with PTEN upstream reading frame protein MP31; the interaction leads to inhibition of mitochondrial lactate dehydrogenase activity, preventing conversion of lactate to pyruvate in mitochondria.

The protein localises to the cytoplasm. Its subcellular location is the mitochondrion inner membrane. The catalysed reaction is (S)-lactate + NAD(+) = pyruvate + NADH + H(+). Its pathway is fermentation; pyruvate fermentation to lactate; (S)-lactate from pyruvate: step 1/1. Functionally, interconverts simultaneously and stereospecifically pyruvate and lactate with concomitant interconversion of NADH and NAD(+). This is L-lactate dehydrogenase B chain (Ldhb) from Rattus norvegicus (Rat).